The chain runs to 165 residues: Copper-resistant cuproprotein CopI (165 aa).

The N-terminal stretch at 1-23 (MKNRILRPALLCVAALFATTAQA) is a signal peptide. Residues 25–42 (AGHDHGSAHAGAHAHDAD) show a composition bias toward basic and acidic residues. A disordered region spans residues 25–50 (AGHDHGSAHAGAHAHDADTPYGRPGD). Cu(2+) contacts are provided by histidine 93, cysteine 148, histidine 153, and methionine 158.

This sequence belongs to the CopI family. As to quaternary structure, monomer.

The protein resides in the periplasm. In terms of biological role, involved in copper tolerance. Required for copper resistance under both aerobic and anaerobic photosynthetic growth conditions. Binds copper. Could be an important defense against copper in the periplasm and may protect not only c type cytochromes but also other proteins with cysteine residues from copper ions that may catalyze nonnative disulfide bond formation. This is Copper-resistant cuproprotein CopI from Rubrivivax gelatinosus (Rhodocyclus gelatinosus).